Here is a 635-residue protein sequence, read N- to C-terminus: tRNA uridine 5-carboxymethylaminomethyl modification enzyme MnmG (635 aa).

FAD is bound at residue 15 to 20; it reads GAGHAG. 276–290 is a binding site for NAD(+); sequence GPRYCPSIEDKIVRF.

Belongs to the MnmG family. Homodimer. Heterotetramer of two MnmE and two MnmG subunits. FAD serves as cofactor.

It is found in the cytoplasm. In terms of biological role, NAD-binding protein involved in the addition of a carboxymethylaminomethyl (cmnm) group at the wobble position (U34) of certain tRNAs, forming tRNA-cmnm(5)s(2)U34. This Streptococcus sanguinis (strain SK36) protein is tRNA uridine 5-carboxymethylaminomethyl modification enzyme MnmG.